The chain runs to 98 residues: NADH-ubiquinone oxidoreductase chain 4L (98 aa).

A run of 3 helical transmembrane segments spans residues 1–21 (MMPISLSLTMAFSLALAGTLI), 28–48 (STLLCLEGMMLSLFILMAMLI), and 59–79 (APLILLVFSACEAGIGLALLV).

It belongs to the complex I subunit 4L family. Core subunit of respiratory chain NADH dehydrogenase (Complex I) which is composed of 45 different subunits.

It is found in the mitochondrion inner membrane. The enzyme catalyses a ubiquinone + NADH + 5 H(+)(in) = a ubiquinol + NAD(+) + 4 H(+)(out). Its function is as follows. Core subunit of the mitochondrial membrane respiratory chain NADH dehydrogenase (Complex I) which catalyzes electron transfer from NADH through the respiratory chain, using ubiquinone as an electron acceptor. Part of the enzyme membrane arm which is embedded in the lipid bilayer and involved in proton translocation. This chain is NADH-ubiquinone oxidoreductase chain 4L (MT-ND4L), found in Petaurus breviceps (Australian sugar glider).